A 358-amino-acid chain; its full sequence is Aromatic amino acid aminotransferase (358 aa).

Lysine 219 carries the N6-(pyridoxal phosphate)lysine modification.

The protein belongs to the class-II pyridoxal-phosphate-dependent aminotransferase family. In terms of assembly, homodimer. Requires pyridoxal 5'-phosphate as cofactor.

The catalysed reaction is an aromatic L-alpha-amino acid + 2-oxoglutarate = an aromatic oxo-acid + L-glutamate. Functionally, aminotransferase that catalyzes the conversion of aromatic amino acids and 2-oxoglutarate into corresponding aromatic oxo acids and L-glutamate. In Nocardia farcinica (strain IFM 10152), this protein is Aromatic amino acid aminotransferase.